We begin with the raw amino-acid sequence, 397 residues long: Phosphoglycerate transport regulatory protein PgtC (397 aa).

The first 24 residues, 1-24 (MFGSCQAYSRELVMATTFSPSATA), serve as a signal peptide directing secretion. A helical transmembrane segment spans residues 102–117 (TSVAVAVSGFGLLINR).

Its subcellular location is the cell membrane. Required for pgtP expression, it may act jointly with the PgtA/PgtB signaling proteins. The chain is Phosphoglycerate transport regulatory protein PgtC (pgtC) from Salmonella typhi.